A 1879-amino-acid chain; its full sequence is Protein TIC 214 (1879 aa).

6 helical membrane-spanning segments follow: residues 18–38 (IINS…FSIG), 64–84 (FITG…HLAL), 87–107 (PYTI…WTNP), 124–144 (LSIQ…HFIL), 172–192 (VGWL…LVWI), and 218–238 (IAPI…GRIP). Disordered stretches follow at residues 245–305 (ETSK…IDET) and 586–702 (ISTS…DEPM). 2 stretches are compositionally biased toward acidic residues: residues 253–268 (AETE…EIET) and 295–305 (EKEDPDKIDET). The segment covering 586–688 (ISTSTPTSTP…SIPASTSTST (103 aa)) has biased composition (low complexity). Residues 691-701 (IKSKDEPKDEP) show a composition bias toward basic and acidic residues.

The protein belongs to the TIC214 family. In terms of assembly, part of the Tic complex.

It is found in the plastid. Its subcellular location is the chloroplast inner membrane. Involved in protein precursor import into chloroplasts. May be part of an intermediate translocation complex acting as a protein-conducting channel at the inner envelope. The sequence is that of Protein TIC 214 from Cucumis sativus (Cucumber).